A 275-amino-acid chain; its full sequence is Transcription factor JUNGBRUNNEN 1 (275 aa).

Residues M1–F24 form a disordered region. An NAC domain is found at P18–R167. Residues V115–N173 mediate DNA binding. The tract at residues C191–P219 is disordered. The span at D198–S211 shows a compositional bias: basic and acidic residues.

In terms of tissue distribution, expressed in roots, root caps, cotyledons, tips and margin of young leaves, senescent regions of fully expanded leaves and floral tissues, including old sepals, petals, staments, mature anthers and pollen grains. Not detected in the abscission zone of open flowers, emerging lateral roots and root meristematic zones.

It localises to the nucleus. In terms of biological role, transcription factor that binds to the 5'- RRYGCCGT-3' consensus core sequence. Central longevity regulator. Negative regulator of leaf senescence. Modulates cellular H(2)O(2) levels and enhances tolerance to various abiotic stresses through the regulation of DREB2A. The chain is Transcription factor JUNGBRUNNEN 1 (JUB1) from Arabidopsis thaliana (Mouse-ear cress).